A 399-amino-acid polypeptide reads, in one-letter code: MLDNKTIEIIKSTVPVLQQHGETITGRFYDRMFQDHPELLNIFNQTNQKKKTQRTALANAVIAAAANIDQLGNIIPVVKQIGHKHRSIGIKPEHYPIVGKYLLIAIKDVLGDAATPDIMQAWEKAYGVIADAFIGIEKDMYEQAEEQAGGWKEYKPFVIAKKERESKEITSFYLKPEDSKPLPEFQAGQYISIKVRIPDSEYTHIRQYSLSDMPGKDYYRISVKKDGVVSSYLHDGLQEGDSIEISAPAGDFVLDHASQKDLVLISAGVGITPMISMLKTSVSKQPERQILFIHAAKNSEYHALRHEVEEAAKHSAVKTAFVYREPTEEDRAGDLHFHEGQIDQQFLKELIANTDADYYICGSPSFITAMHKLVSELGSAPESIHYELFGPQLSLAQSV.

Residues 1–138 (MLDNKTIEII…IADAFIGIEK (138 aa)) form the Globin domain. His85 provides a ligand contact to heme b. Active-site charge relay system residues include Tyr95 and Glu137. Residues 149-399 (GGWKEYKPFV…GPQLSLAQSV (251 aa)) are reductase. Residues 152-255 (KEYKPFVIAK…SAPAGDFVLD (104 aa)) form the FAD-binding FR-type domain. Residues Tyr190 and 206–209 (RQYS) each bind FAD. An NADP(+)-binding site is contributed by 268-273 (GVGITP). 388–391 (LFGP) serves as a coordination point for FAD.

The protein belongs to the globin family. Two-domain flavohemoproteins subfamily. This sequence in the C-terminal section; belongs to the flavoprotein pyridine nucleotide cytochrome reductase family. Heme b is required as a cofactor. FAD serves as cofactor.

The catalysed reaction is 2 nitric oxide + NADPH + 2 O2 = 2 nitrate + NADP(+) + H(+). The enzyme catalyses 2 nitric oxide + NADH + 2 O2 = 2 nitrate + NAD(+) + H(+). Is involved in NO detoxification in an aerobic process, termed nitric oxide dioxygenase (NOD) reaction that utilizes O(2) and NAD(P)H to convert NO to nitrate, which protects the bacterium from various noxious nitrogen compounds. Therefore, plays a central role in the inducible response to nitrosative stress. The chain is Flavohemoprotein (hmp) from Bacillus subtilis (strain 168).